A 393-amino-acid polypeptide reads, in one-letter code: Polygalacturonase (393 aa).

A signal peptide spans 1 to 23 (MANRRSLFSLSLIFVFMINSAIA). 6 PbH1 repeats span residues 115–136 (VNGV…WACK), 178–204 (FQNV…HVQM), 205–226 (SSGV…SIGP), 228–248 (TSNL…SIGS), 258–279 (VQNV…RIKS), and 288–309 (ARNI…VIDQ). The Proton donor role is filled by aspartate 219. An intrachain disulfide couples cysteine 221 to cysteine 238. The active site involves histidine 242. Asparagine 260 carries an N-linked (GlcNAc...) asparagine glycan. Cystine bridges form between cysteine 349/cysteine 355 and cysteine 376/cysteine 392.

It belongs to the glycosyl hydrolase 28 family.

The protein localises to the secreted. The protein resides in the cell wall. It carries out the reaction (1,4-alpha-D-galacturonosyl)n+m + H2O = (1,4-alpha-D-galacturonosyl)n + (1,4-alpha-D-galacturonosyl)m.. Functionally, acts in concert with the pectinesterase, in the ripening process. Is involved in cell wall metabolism, specifically in polyuronide degradation. The polypeptide is Polygalacturonase (Prunus persica (Peach)).